Here is a 190-residue protein sequence, read N- to C-terminus: Peptidyl-tRNA hydrolase (190 aa).

Residue Tyr18 coordinates tRNA. His23 serves as the catalytic Proton acceptor. Residues Phe67, Asn69, and Asn115 each contribute to the tRNA site.

This sequence belongs to the PTH family. Monomer.

Its subcellular location is the cytoplasm. The enzyme catalyses an N-acyl-L-alpha-aminoacyl-tRNA + H2O = an N-acyl-L-amino acid + a tRNA + H(+). In terms of biological role, hydrolyzes ribosome-free peptidyl-tRNAs (with 1 or more amino acids incorporated), which drop off the ribosome during protein synthesis, or as a result of ribosome stalling. Functionally, catalyzes the release of premature peptidyl moieties from peptidyl-tRNA molecules trapped in stalled 50S ribosomal subunits, and thus maintains levels of free tRNAs and 50S ribosomes. In Leptospira interrogans serogroup Icterohaemorrhagiae serovar Lai (strain 56601), this protein is Peptidyl-tRNA hydrolase.